An 867-amino-acid chain; its full sequence is Probable alpha,alpha-trehalose-phosphate synthase [UDP-forming] 9 (867 aa).

The residue at position 5 (Ser5) is a Phosphoserine. Residue Thr32 is modified to Phosphothreonine. Residues 59-546 form a glycosyltransferase region; that stretch reads ERKIIVANML…AKSFMQDLER (488 aa).

This sequence in the N-terminal section; belongs to the glycosyltransferase 20 family. The protein in the C-terminal section; belongs to the trehalose phosphatase family.

It catalyses the reaction D-glucose 6-phosphate + UDP-alpha-D-glucose = alpha,alpha-trehalose 6-phosphate + UDP + H(+). The polypeptide is Probable alpha,alpha-trehalose-phosphate synthase [UDP-forming] 9 (TPS9) (Arabidopsis thaliana (Mouse-ear cress)).